The following is a 218-amino-acid chain: ATP phosphoribosyltransferase (218 aa).

The protein belongs to the ATP phosphoribosyltransferase family. Short subfamily. In terms of assembly, heteromultimer composed of HisG and HisZ subunits.

Its subcellular location is the cytoplasm. The enzyme catalyses 1-(5-phospho-beta-D-ribosyl)-ATP + diphosphate = 5-phospho-alpha-D-ribose 1-diphosphate + ATP. Its pathway is amino-acid biosynthesis; L-histidine biosynthesis; L-histidine from 5-phospho-alpha-D-ribose 1-diphosphate: step 1/9. Its function is as follows. Catalyzes the condensation of ATP and 5-phosphoribose 1-diphosphate to form N'-(5'-phosphoribosyl)-ATP (PR-ATP). Has a crucial role in the pathway because the rate of histidine biosynthesis seems to be controlled primarily by regulation of HisG enzymatic activity. This Burkholderia mallei (strain ATCC 23344) protein is ATP phosphoribosyltransferase.